The sequence spans 453 residues: Choline kinase alpha (453 aa).

Positions 22–81 are disordered; sequence CGGSAAPTPGVGQQRDAAGELESKQLGGRSQPLALPPPPPPPLPLPPPPSPPLADEQPEP. Pro residues predominate over residues 55 to 73; it reads ALPPPPPPPLPLPPPPSPP. A Phosphoserine modification is found at S71. ATP contacts are provided by residues 113 to 119, R142, and 203 to 209; these read RGGLSNM and QFIPSRR. A phosphocholine-binding site is contributed by 115–117; that stretch reads GLS. An N6-acetyllysine modification is found at K243. A Phosphoserine modification is found at S275. Residues Q304 and D326 each contribute to the ATP site.

This sequence belongs to the choline/ethanolamine kinase family. As to quaternary structure, heterodimer with CHKB. Homodimer. In terms of assembly, monomer; acetylation by KAT5 promotes dissociation of the homodimer and monomerization. Post-translationally, phosphorylated at Ser-275 by AMPK in response to glucose deprivation, leading to localization to lipid droplets. In terms of processing, acetylated by KAT5 at Lys-243 following phosphorylation by AMPK, leading to monomerization and conversion into a tyrosine-protein kinase. In terms of tissue distribution, testis, brain, lung, kidney and liver.

It is found in the cytoplasm. Its subcellular location is the cytosol. It localises to the lipid droplet. The enzyme catalyses choline + ATP = phosphocholine + ADP + H(+). The catalysed reaction is ethanolamine + ATP = phosphoethanolamine + ADP + H(+). It carries out the reaction L-tyrosyl-[protein] + ATP = O-phospho-L-tyrosyl-[protein] + ADP + H(+). It functions in the pathway phospholipid metabolism; phosphatidylcholine biosynthesis; phosphocholine from choline: step 1/1. Its pathway is phospholipid metabolism; phosphatidylethanolamine biosynthesis; phosphatidylethanolamine from ethanolamine: step 1/3. Functionally, plays a key role in phospholipid biosynthesis by catalyzing the phosphorylation of free choline to phosphocholine, the first step in phosphatidylcholine biosynthesis. Also phosphorylates ethanolamine, thereby contributing to phosphatidylethanolamine biosynthesis. Has higher activity with choline. Its function is as follows. This isoform plays a key role in lipolysis of lipid droplets following glucose deprivation. In response to glucose deprivation, phosphorylated by AMPK, promoting localization to lipid droplets. Phosphorylation is followed by acetylation by KAT5, leading to dissociation of the homodimer into a monomer. Monomeric CHKA isoform 1 is converted into a tyrosine-protein kinase, which phosphorylates lipid droplet structural proteins PLIN2 and PLIN3, leading to lipolysis of lipid droplets. The polypeptide is Choline kinase alpha (Chka) (Rattus norvegicus (Rat)).